The following is a 709-amino-acid chain: Phosphoribosylformylglycinamidine synthase subunit PurL (709 aa).

Residue H36 is part of the active site. Positions 39 and 80 each coordinate ATP. E82 contributes to the Mg(2+) binding site. Substrate is bound by residues 83 to 86 (SHNH) and R105. The active-site Proton acceptor is H84. D106 is a Mg(2+) binding site. Q226 lines the substrate pocket. D252 provides a ligand contact to Mg(2+). 294–296 (ETQ) contributes to the substrate binding site. 2 residues coordinate ATP: D470 and G507. S510 contacts substrate.

The protein belongs to the FGAMS family. As to quaternary structure, monomer. Part of the FGAM synthase complex composed of 1 PurL, 1 PurQ and 2 PurS subunits.

It is found in the cytoplasm. It catalyses the reaction N(2)-formyl-N(1)-(5-phospho-beta-D-ribosyl)glycinamide + L-glutamine + ATP + H2O = 2-formamido-N(1)-(5-O-phospho-beta-D-ribosyl)acetamidine + L-glutamate + ADP + phosphate + H(+). It participates in purine metabolism; IMP biosynthesis via de novo pathway; 5-amino-1-(5-phospho-D-ribosyl)imidazole from N(2)-formyl-N(1)-(5-phospho-D-ribosyl)glycinamide: step 1/2. In terms of biological role, part of the phosphoribosylformylglycinamidine synthase complex involved in the purines biosynthetic pathway. Catalyzes the ATP-dependent conversion of formylglycinamide ribonucleotide (FGAR) and glutamine to yield formylglycinamidine ribonucleotide (FGAM) and glutamate. The FGAM synthase complex is composed of three subunits. PurQ produces an ammonia molecule by converting glutamine to glutamate. PurL transfers the ammonia molecule to FGAR to form FGAM in an ATP-dependent manner. PurS interacts with PurQ and PurL and is thought to assist in the transfer of the ammonia molecule from PurQ to PurL. The polypeptide is Phosphoribosylformylglycinamidine synthase subunit PurL (Saccharolobus islandicus (strain M.16.4 / Kamchatka #3) (Sulfolobus islandicus)).